A 234-amino-acid chain; its full sequence is Leucyl/phenylalanyl-tRNA--protein transferase (234 aa).

Belongs to the L/F-transferase family.

It localises to the cytoplasm. It catalyses the reaction N-terminal L-lysyl-[protein] + L-leucyl-tRNA(Leu) = N-terminal L-leucyl-L-lysyl-[protein] + tRNA(Leu) + H(+). The enzyme catalyses N-terminal L-arginyl-[protein] + L-leucyl-tRNA(Leu) = N-terminal L-leucyl-L-arginyl-[protein] + tRNA(Leu) + H(+). The catalysed reaction is L-phenylalanyl-tRNA(Phe) + an N-terminal L-alpha-aminoacyl-[protein] = an N-terminal L-phenylalanyl-L-alpha-aminoacyl-[protein] + tRNA(Phe). In terms of biological role, functions in the N-end rule pathway of protein degradation where it conjugates Leu, Phe and, less efficiently, Met from aminoacyl-tRNAs to the N-termini of proteins containing an N-terminal arginine or lysine. The sequence is that of Leucyl/phenylalanyl-tRNA--protein transferase from Escherichia coli O81 (strain ED1a).